Consider the following 118-residue polypeptide: UPF0342 protein Hore_03100 (118 aa).

This sequence belongs to the UPF0342 family.

This is UPF0342 protein Hore_03100 from Halothermothrix orenii (strain H 168 / OCM 544 / DSM 9562).